Here is a 112-residue protein sequence, read N- to C-terminus: Histone H2A, sperm (112 aa).

Residue Gln-91 is modified to N5-methylglutamine. Lys-106 is covalently cross-linked (Glycyl lysine isopeptide (Lys-Gly) (interchain with G-Cter in ubiquitin)).

Belongs to the histone H2A family. As to quaternary structure, the nucleosome is a histone octamer containing two molecules each of H2A, H2B, H3 and H4 assembled in one H3-H4 heterotetramer and two H2A-H2B heterodimers. The octamer wraps approximately 147 bp of DNA. Monoubiquitination gives a specific tag for epigenetic transcriptional repression.

The protein resides in the nucleus. It localises to the chromosome. In terms of biological role, core component of nucleosome. Nucleosomes wrap and compact DNA into chromatin, limiting DNA accessibility to the cellular machineries which require DNA as a template. Histones thereby play a central role in transcription regulation, DNA repair, DNA replication and chromosomal stability. DNA accessibility is regulated via a complex set of post-translational modifications of histones, also called histone code, and nucleosome remodeling. In Lytechinus pictus (Painted sea urchin), this protein is Histone H2A, sperm.